We begin with the raw amino-acid sequence, 316 residues long: Ribosomal RNA small subunit methyltransferase H (316 aa).

S-adenosyl-L-methionine-binding positions include G35–H37, D55, F79, D101, and Q108.

It belongs to the methyltransferase superfamily. RsmH family.

It is found in the cytoplasm. The enzyme catalyses cytidine(1402) in 16S rRNA + S-adenosyl-L-methionine = N(4)-methylcytidine(1402) in 16S rRNA + S-adenosyl-L-homocysteine + H(+). Functionally, specifically methylates the N4 position of cytidine in position 1402 (C1402) of 16S rRNA. In Vibrio vulnificus (strain CMCP6), this protein is Ribosomal RNA small subunit methyltransferase H.